A 1067-amino-acid polypeptide reads, in one-letter code: Lon protease homolog, mitochondrial (1067 aa).

A mitochondrion-targeting transit peptide spans 1–36; sequence MITRLSGACLRRSGAKRNWPREHLVHRSLLASFSTT. Positions 55 to 82 are enriched in basic and acidic residues; that stretch reads KSKEPKDNKPLDNKNDPKKTHNEDESHT. Disordered regions lie at residues 55-142 and 262-314; these read KSKE…MPLN and IPPK…ESTP. The span at 128–139 shows a compositional bias: acidic residues; the sequence is FELGGEENEDEM. The region spanning 162-425 is the Lon N-terminal domain; it reads LLALPIARRP…KALYVLKKEL (264 aa). A compositionally biased stretch (basic and acidic residues) spans 293–311; it reads VKSDLKQDNGKEEPEKEVE. 578-585 serves as a coordination point for ATP; it reads GPPGVGKT. Positions 791–820 are disordered; the sequence is NSKEKSTGKSGKKTSPQSSEDAANKEASSV. Positions 854 to 1040 constitute a Lon proteolytic domain; it reads TTPPGVVMGL…DDVFKRVFSN (187 aa). Catalysis depends on residues serine 946 and lysine 989.

It belongs to the peptidase S16 family. As to quaternary structure, homohexamer or homoheptamer. Organized in a ring with a central cavity.

Its subcellular location is the mitochondrion matrix. The catalysed reaction is Hydrolysis of proteins in presence of ATP.. In terms of biological role, ATP-dependent serine protease that mediates the selective degradation of misfolded, unassembled or oxidatively damaged polypeptides as well as certain short-lived regulatory proteins in the mitochondrial matrix. May also have a chaperone function in the assembly of inner membrane protein complexes. Participates in the regulation of mitochondrial gene expression and in the maintenance of the integrity of the mitochondrial genome. Binds to mitochondrial DNA in a site-specific manner. The polypeptide is Lon protease homolog, mitochondrial (pim1) (Schizosaccharomyces pombe (strain 972 / ATCC 24843) (Fission yeast)).